The following is a 437-amino-acid chain: MATPVSSNAELFERAQRSIPGGVNSPVRAFRAVGGTPRFIARAQGAYMWDAEGKQYIDYIGSWGPMILGHGHPAVLAAVQKAATEGFSFGAPTEREVELAETILALVPSCEQIRLVSSGTEAAMSAIRLARGATGRSKLIKFEGCYHGHADALLVKAGSGLATFGNPTSAGVPPEVVQHTLVLTYNDIEQLEEAFKIHGPELACVMIEPIAGNMNFVRATVPFMKRIRELCTQHGALLVFDEVMCGFRVALGSAQSLYAQAIPGFAPDVSVFGKVIGGGMPLAAFGASRKIMSLLAPLGPVYQAGTLSGNPVATACGLATLREISQPGFFEALGARTRRLVDGLSAAAADAGVPFVGDCQGGMFGFFFPRNRGEGLPQNYATVMATDQARFNSFFHGLLDRGVYLAPALYEAGFVSAAHSDADIDATVAAARAALQP.

Position 274 is an N6-(pyridoxal phosphate)lysine (Lys274).

Belongs to the class-III pyridoxal-phosphate-dependent aminotransferase family. HemL subfamily. As to quaternary structure, homodimer. Requires pyridoxal 5'-phosphate as cofactor.

The protein resides in the cytoplasm. It carries out the reaction (S)-4-amino-5-oxopentanoate = 5-aminolevulinate. It functions in the pathway porphyrin-containing compound metabolism; protoporphyrin-IX biosynthesis; 5-aminolevulinate from L-glutamyl-tRNA(Glu): step 2/2. The polypeptide is Glutamate-1-semialdehyde 2,1-aminomutase (Leptothrix cholodnii (strain ATCC 51168 / LMG 8142 / SP-6) (Leptothrix discophora (strain SP-6))).